A 429-amino-acid chain; its full sequence is Histidine--tRNA ligase (429 aa).

It belongs to the class-II aminoacyl-tRNA synthetase family. In terms of assembly, homodimer.

Its subcellular location is the cytoplasm. It carries out the reaction tRNA(His) + L-histidine + ATP = L-histidyl-tRNA(His) + AMP + diphosphate + H(+). The protein is Histidine--tRNA ligase of Streptococcus pneumoniae (strain Taiwan19F-14).